We begin with the raw amino-acid sequence, 547 residues long: Glucose-6-phosphate isomerase 1 (547 aa).

Catalysis depends on E353, which acts as the Proton donor. Catalysis depends on residues H384 and K512.

The protein belongs to the GPI family.

It is found in the cytoplasm. The catalysed reaction is alpha-D-glucose 6-phosphate = beta-D-fructose 6-phosphate. Its pathway is carbohydrate biosynthesis; gluconeogenesis. It participates in carbohydrate degradation; glycolysis; D-glyceraldehyde 3-phosphate and glycerone phosphate from D-glucose: step 2/4. Catalyzes the reversible isomerization of glucose-6-phosphate to fructose-6-phosphate. This Chromobacterium violaceum (strain ATCC 12472 / DSM 30191 / JCM 1249 / CCUG 213 / NBRC 12614 / NCIMB 9131 / NCTC 9757 / MK) protein is Glucose-6-phosphate isomerase 1.